Reading from the N-terminus, the 84-residue chain is Small ribosomal subunit protein uS17 (84 aa).

The protein belongs to the universal ribosomal protein uS17 family. Part of the 30S ribosomal subunit.

Its function is as follows. One of the primary rRNA binding proteins, it binds specifically to the 5'-end of 16S ribosomal RNA. The protein is Small ribosomal subunit protein uS17 of Enterobacter sp. (strain 638).